The sequence spans 72 residues: Exodeoxyribonuclease 7 small subunit (72 aa).

The protein belongs to the XseB family. As to quaternary structure, heterooligomer composed of large and small subunits.

The protein resides in the cytoplasm. The enzyme catalyses Exonucleolytic cleavage in either 5'- to 3'- or 3'- to 5'-direction to yield nucleoside 5'-phosphates.. Its function is as follows. Bidirectionally degrades single-stranded DNA into large acid-insoluble oligonucleotides, which are then degraded further into small acid-soluble oligonucleotides. This is Exodeoxyribonuclease 7 small subunit from Chlamydia trachomatis serovar A (strain ATCC VR-571B / DSM 19440 / HAR-13).